The primary structure comprises 365 residues: Aminomethyltransferase (365 aa).

It belongs to the GcvT family. In terms of assembly, the glycine cleavage system is composed of four proteins: P, T, L and H.

It catalyses the reaction N(6)-[(R)-S(8)-aminomethyldihydrolipoyl]-L-lysyl-[protein] + (6S)-5,6,7,8-tetrahydrofolate = N(6)-[(R)-dihydrolipoyl]-L-lysyl-[protein] + (6R)-5,10-methylene-5,6,7,8-tetrahydrofolate + NH4(+). In terms of biological role, the glycine cleavage system catalyzes the degradation of glycine. This chain is Aminomethyltransferase, found in Cronobacter sakazakii (strain ATCC BAA-894) (Enterobacter sakazakii).